Reading from the N-terminus, the 159-residue chain is NADH-quinone oxidoreductase subunit I (159 aa).

4Fe-4S ferredoxin-type domains lie at 51-80 (RRYE…IESD) and 90-119 (TRYD…EGPN). The [4Fe-4S] cluster site is built by Cys60, Cys63, Cys66, Cys70, Cys99, Cys102, Cys105, and Cys109.

The protein belongs to the complex I 23 kDa subunit family. As to quaternary structure, NDH-1 is composed of 14 different subunits. Subunits NuoA, H, J, K, L, M, N constitute the membrane sector of the complex. Requires [4Fe-4S] cluster as cofactor.

It is found in the cell inner membrane. The enzyme catalyses a quinone + NADH + 5 H(+)(in) = a quinol + NAD(+) + 4 H(+)(out). Functionally, NDH-1 shuttles electrons from NADH, via FMN and iron-sulfur (Fe-S) centers, to quinones in the respiratory chain. The immediate electron acceptor for the enzyme in this species is believed to be ubiquinone. Couples the redox reaction to proton translocation (for every two electrons transferred, four hydrogen ions are translocated across the cytoplasmic membrane), and thus conserves the redox energy in a proton gradient. The protein is NADH-quinone oxidoreductase subunit I of Rickettsia prowazekii (strain Madrid E).